A 308-amino-acid polypeptide reads, in one-letter code: Neurexophilin-4 (308 aa).

Residues 1 to 23 (MRLLPEWFLLLFGPWLLRKAVSA) form the signal peptide. Positions 24-84 (QIPESGRPQY…GALARAGAAG (61 aa)) are II. Positions 40–51 (AAGAGAPGQQLP) are enriched in low complexity. A disordered region spans residues 40–59 (AAGAGAPGQQLPEPRSSDGL). 4 N-linked (GlcNAc...) asparagine glycosylation sites follow: asparagine 72, asparagine 133, asparagine 143, and asparagine 149. The interval 85–163 (ALPAQRTKRK…IVPPSKRVEF (79 aa)) is III. Residues 164 to 224 (GGVWLPGPVP…PLGGALGVPG (61 aa)) are IV (linker domain). Positions 225–308 (AKESRAFNCH…NFQSEHPYFG (84 aa)) are v (Cys-rich).

Belongs to the neurexophilin family. In terms of processing, may be proteolytically processed at the boundary between the N-terminal non-conserved and the central conserved domain in neuron-like cells. As to expression, expressed in brain, spleen, and testis.

It is found in the secreted. Its function is as follows. May be signaling molecules that resemble neuropeptides and that act by binding to alpha-neurexins and possibly other receptors. The chain is Neurexophilin-4 (NXPH4) from Homo sapiens (Human).